A 433-amino-acid polypeptide reads, in one-letter code: Sulfhydrylase FUB7 (433 aa).

Lysine 211 carries the post-translational modification N6-(pyridoxal phosphate)lysine.

The protein belongs to the trans-sulfuration enzymes family. The cofactor is pyridoxal 5'-phosphate.

It participates in mycotoxin biosynthesis. Sulfhydrylase; part of the gene cluster that mediates the biosynthesis of fusaric acid, a mycotoxin with low to moderate toxicity to animals and humans, but with high phytotoxic properties. L-aspartate is suggested as fusaric acid amino acid precursor that is activated and further processed to O-acetyl-L-homoserine by cluster enzymes aspartate kinase FUB3 and homoserine O-acetyltransferase FUB5, as well as enzymes of the primary metabolism. The polyketide synthase (PKS) FUB1 generates the triketide trans-2-hexenal which is presumptively released by the hydrolase FUB4 and linked to the NRPS-bound amino acid precursor by NAD(P)-dependent dehydrogenase FUB6. FUB1, FUB4, and the non-canonical NRPS Fub8 may form an enzyme complex. Further processing of the NRPS-bound intermediate might be carried out by FUB6 and the sulfhydrylase FUB7, enabling a spontaneous electrocyclization to close the carbon backbone of fusaric acid. Dihydrofusaric acid is likely to be released via reduction by the thioester reductase (TR) domain of FUB8 whereupon the final oxidation to fusaric acid may (also) be performed by the FMN-dependent dehydrogenase FUB9. This chain is Sulfhydrylase FUB7, found in Fusarium oxysporum f. sp. lycopersici (strain 4287 / CBS 123668 / FGSC 9935 / NRRL 34936) (Fusarium vascular wilt of tomato).